We begin with the raw amino-acid sequence, 612 residues long: Dihydroxy-acid dehydratase (612 aa).

Asp81 serves as a coordination point for Mg(2+). A [2Fe-2S] cluster-binding site is contributed by Cys122. Residues Asp123 and Lys124 each coordinate Mg(2+). At Lys124 the chain carries N6-carboxylysine. [2Fe-2S] cluster is bound at residue Cys195. Glu491 provides a ligand contact to Mg(2+). The active-site Proton acceptor is the Ser517.

This sequence belongs to the IlvD/Edd family. In terms of assembly, homodimer. The cofactor is [2Fe-2S] cluster. It depends on Mg(2+) as a cofactor.

The catalysed reaction is (2R)-2,3-dihydroxy-3-methylbutanoate = 3-methyl-2-oxobutanoate + H2O. It catalyses the reaction (2R,3R)-2,3-dihydroxy-3-methylpentanoate = (S)-3-methyl-2-oxopentanoate + H2O. It functions in the pathway amino-acid biosynthesis; L-isoleucine biosynthesis; L-isoleucine from 2-oxobutanoate: step 3/4. The protein operates within amino-acid biosynthesis; L-valine biosynthesis; L-valine from pyruvate: step 3/4. Its function is as follows. Functions in the biosynthesis of branched-chain amino acids. Catalyzes the dehydration of (2R,3R)-2,3-dihydroxy-3-methylpentanoate (2,3-dihydroxy-3-methylvalerate) into 2-oxo-3-methylpentanoate (2-oxo-3-methylvalerate) and of (2R)-2,3-dihydroxy-3-methylbutanoate (2,3-dihydroxyisovalerate) into 2-oxo-3-methylbutanoate (2-oxoisovalerate), the penultimate precursor to L-isoleucine and L-valine, respectively. The protein is Dihydroxy-acid dehydratase of Rhizobium etli (strain ATCC 51251 / DSM 11541 / JCM 21823 / NBRC 15573 / CFN 42).